Reading from the N-terminus, the 304-residue chain is Acetylglutamate kinase (304 aa).

Substrate is bound by residues 74–75 (GG), arginine 96, and asparagine 201.

This sequence belongs to the acetylglutamate kinase family. ArgB subfamily.

It localises to the cytoplasm. It catalyses the reaction N-acetyl-L-glutamate + ATP = N-acetyl-L-glutamyl 5-phosphate + ADP. It participates in amino-acid biosynthesis; L-arginine biosynthesis; N(2)-acetyl-L-ornithine from L-glutamate: step 2/4. Catalyzes the ATP-dependent phosphorylation of N-acetyl-L-glutamate. The protein is Acetylglutamate kinase of Alkalilimnicola ehrlichii (strain ATCC BAA-1101 / DSM 17681 / MLHE-1).